The primary structure comprises 278 residues: BPI fold-containing family A member 1 (278 aa).

The N-terminal stretch at 1–19 (MFLVGSLVVLCGLLAHSTA) is a signal peptide. Repeat repeat units follow at residues 23 to 28 (GLPLPL), 30 to 36 (QGPPLPL), 39 to 44 (GPPLPL), and 47 to 52 (GQLLPL). Residues 23–52 (GLPLPLGQGPPLPLNQGPPLPLNQGQLLPL) form a 4 X 6 AA repeats of G-[LPQ]-[PL]-L-P-L region. The tract at residues 112 to 117 (LVGGLL) is important for surfactant activity and antibacterial properties. N-linked (GlcNAc...) asparagine glycans are attached at residues Asn-182 and Asn-228. Residues Cys-204 and Cys-246 are joined by a disulfide bond.

Belongs to the BPI/LBP/Plunc superfamily. Plunc family. In terms of assembly, monomer. Interacts (via N-terminus) with SCNN1B, a subunit of the heterotrimeric epithelial sodium channel (ENaC); this inhibits proteolytic activation of ENaC. Detected in airway epithelia (trachea and lung) and in bronchoalveolar fluid (at protein level). Upper airways, nasopharyngeal epithelium and thymus. Highest expression in the trachea and progressive decrease from proximal (bronchial) to distal (bronchiolar) airways. No expression is detected in the terminal bronchioles, respiratory bronchioles or lung alveoli.

It is found in the secreted. In terms of biological role, lipid-binding protein which shows high specificity for the surfactant phospholipid dipalmitoylphosphatidylcholine (DPPC). Plays a role in the innate immune responses of the upper airways. Reduces the surface tension in secretions from airway epithelia and inhibits the formation of biofilm by pathogenic Gram-negative bacteria, such as P.aeruginosa and K.pneumoniae. Negatively regulates proteolytic cleavage of SCNN1G, an event that is required for activation of the epithelial sodium channel (ENaC), and thereby contributes to airway surface liquid homeostasis and proper clearance of mucus. Plays a role in the airway inflammatory response after exposure to irritants. May attract macrophages and neutrophils. In Mus musculus (Mouse), this protein is BPI fold-containing family A member 1 (Bpifa1).